The following is a 931-amino-acid chain: Valine--tRNA ligase (931 aa).

Residues 43–53 carry the 'HIGH' region motif; that stretch reads PNVTGALHIGH. The disordered stretch occupies residues 351-370; sequence IPHTDKDGNAHDAEPRTIQT. Residues 353–365 are compositionally biased toward basic and acidic residues; sequence HTDKDGNAHDAEP. The 'KMSKS' region motif lies at 552–556; sequence KMSKS. Position 555 (K555) interacts with ATP. Residues 691–717 form a disordered region; it reads LQGRGLGEGDEAVPAPADGPLSPALSP. Residues 864 to 930 are a coiled coil; the sequence is VIDIAAERER…DRLSAALARL (67 aa).

This sequence belongs to the class-I aminoacyl-tRNA synthetase family. ValS type 1 subfamily. In terms of assembly, monomer.

It is found in the cytoplasm. It catalyses the reaction tRNA(Val) + L-valine + ATP = L-valyl-tRNA(Val) + AMP + diphosphate. Its function is as follows. Catalyzes the attachment of valine to tRNA(Val). As ValRS can inadvertently accommodate and process structurally similar amino acids such as threonine, to avoid such errors, it has a 'posttransfer' editing activity that hydrolyzes mischarged Thr-tRNA(Val) in a tRNA-dependent manner. The sequence is that of Valine--tRNA ligase from Sphingopyxis alaskensis (strain DSM 13593 / LMG 18877 / RB2256) (Sphingomonas alaskensis).